The following is a 648-amino-acid chain: Macrolide export ATP-binding/permease protein MacB (648 aa).

Residues 5 to 243 (LELCNVSRSY…QGVDAAVVNT (239 aa)) enclose the ABC transporter domain. 41-48 (GVSGSGKS) is a binding site for ATP. Helical transmembrane passes span 273–293 (LLTM…VVVG), 417–437 (ANVV…IGVA), 523–543 (LFLT…VMNI), 578–598 (LVCL…AFML), and 611–631 (LTAL…FGWL).

It belongs to the ABC transporter superfamily. Macrolide exporter (TC 3.A.1.122) family. As to quaternary structure, homodimer. Part of the tripartite efflux system MacAB-TolC, which is composed of an inner membrane transporter, MacB, a periplasmic membrane fusion protein, MacA, and an outer membrane component, TolC. The complex forms a large protein conduit and can translocate molecules across both the inner and outer membranes. Interacts with MacA.

It localises to the cell inner membrane. Part of the tripartite efflux system MacAB-TolC. MacB is a non-canonical ABC transporter that contains transmembrane domains (TMD), which form a pore in the inner membrane, and an ATP-binding domain (NBD), which is responsible for energy generation. Confers resistance against macrolides. In Salmonella paratyphi A (strain ATCC 9150 / SARB42), this protein is Macrolide export ATP-binding/permease protein MacB.